The following is a 2385-amino-acid chain: Neuron navigator 3 (2385 aa).

Residues 17–38 (SKPVHTALPIPNLGTTGSQHCS) are disordered. Residues 29–38 (LGTTGSQHCS) show a composition bias toward polar residues. Residues 77–184 (KEDSKIYTDW…LFFSLSRYKQ (108 aa)) enclose the Calponin-homology (CH) domain. Positions 203-625 (VTHASPPSEA…LPQQQQHSHP (423 aa)) are disordered. Composition is skewed to polar residues over residues 210 to 243 (SEAS…TSQK), 258 to 279 (GSSS…FNSI), and 297 to 316 (KGPQ…STAG). Over residues 318–329 (PPASAIPSPSAS) the composition is skewed to low complexity. The span at 335–352 (KSMNVKHSATSTMLTVKQ) shows a compositional bias: polar residues. Composition is skewed to low complexity over residues 353 to 363 (SSTATSPTPSS) and 427 to 439 (NSGL…TNSS). The span at 465-491 (PKEKEEKNRDKNKVCTEKPVKEEKDQV) shows a compositional bias: basic and acidic residues. The segment covering 521–535 (IPSSSGIPKPGSKVP) has biased composition (low complexity). Composition is skewed to polar residues over residues 537–548 (VKQTISPGSTAS), 557–567 (TKGSPSQSLSK), and 591–625 (ASPS…HSHP). The stretch at 679-707 (ETRRMRTVKNIADLRQNLEETMSSLRGTQ) forms a coiled coil. Disordered stretches follow at residues 877 to 1312 (ADSW…SPLF), 1351 to 1370 (SSSS…TSLH), 1410 to 1468 (LSES…SAMS), 1650 to 1778 (GALN…KRQN), 1850 to 1881 (DRLK…SRQS), and 2360 to 2385 (SSTQ…ESTL). Positions 882 to 895 (DSSSVSSGLSDTLD) are enriched in low complexity. Over residues 896–925 (NISTDDLNTTSSVSSYSNITVPSRKNTQLR) the composition is skewed to polar residues. Positions 942–959 (EELKKPEEDFDSHGDAGG) are enriched in basic and acidic residues. Polar residues predominate over residues 979–988 (ASLSVSQTGS). A compositionally biased stretch (basic and acidic residues) spans 1014–1026 (GKTDDAKASEKGK). Low complexity-rich tracts occupy residues 1074-1092 (GSSA…GSAT) and 1157-1170 (SSTS…SSKS). Residues 1187 to 1196 (GRSSPVTVNQ) are compositionally biased toward polar residues. Composition is skewed to low complexity over residues 1206–1226 (VSDS…TSAS) and 1253–1263 (GAKAGGKSASA). The segment covering 1264–1289 (PNTEGVKSSSVMPSPSTTLARQGSLE) has biased composition (polar residues). Residues 1296–1305 (GSMGSAGGLS) are compositionally biased toward gly residues. Basic and acidic residues predominate over residues 1436-1445 (NQEEGKEWLR). A compositionally biased stretch (polar residues) spans 1446-1462 (SHSTGGLQDTGNQSPLV). Phosphoserine occurs at positions 1459 and 1463. The stretch at 1562–1653 (AEEKAHSEQI…AQAAIQGALN (92 aa)) forms a coiled coil. Residues 1672 to 1689 (SVSSINSATSHSSIGSGN) are compositionally biased toward low complexity. The segment covering 1701–1714 (WVNSRGSELRSSFK) has biased composition (polar residues). Residues 1794–1861 (EAEAEIILQL…LKAETGNTAK (68 aa)) adopt a coiled-coil conformation. The segment covering 1867 to 1881 (SESSSSTSSSSSRQS) has biased composition (low complexity).

It belongs to the Nav/unc-53 family. As to expression, highly expressed in brain. Expressed at low levels in heart and placenta. Present in activated T-cells but not in resting T-cells (at protein level). Down-regulated in primary neuroblastoma.

It localises to the nucleus outer membrane. Plays a role in cell migration. May be involved in neuron regeneration. May regulate IL2 production by T-cells. In Homo sapiens (Human), this protein is Neuron navigator 3 (NAV3).